Consider the following 572-residue polypeptide: 2-hydroxyacyl-CoA lyase (572 aa).

Residue alanine 2 is modified to N-acetylalanine. Residue glutamate 58 coordinates thiamine diphosphate. Residues 407 to 488 (TMDVGRSVLV…IIVFNNGGVY (82 aa)) are thiamine pyrophosphate binding. Positions 457 and 484 each coordinate Mg(2+).

Belongs to the TPP enzyme family. As to quaternary structure, homotetramer. Requires Mg(2+) as cofactor. The cofactor is thiamine diphosphate.

The catalysed reaction is an (R)-2-hydroxy-long-chain-fatty acyl-CoA = a long-chain fatty aldehyde + formyl-CoA. It catalyses the reaction a 2-hydroxy-3-methyl fatty acyl-CoA = a 2-methyl-branched fatty aldehyde + formyl-CoA. Catalyzes a carbon-carbon cleavage reaction; cleaves a 2-hydroxy-3-methylacyl-CoA into formyl-CoA and a 2-methyl-branched fatty aldehyde. This chain is 2-hydroxyacyl-CoA lyase (HACL), found in Arabidopsis thaliana (Mouse-ear cress).